The sequence spans 162 residues: UPF0178 protein RSKD131_2223 (162 aa).

It belongs to the UPF0178 family.

The chain is UPF0178 protein RSKD131_2223 from Cereibacter sphaeroides (strain KD131 / KCTC 12085) (Rhodobacter sphaeroides).